Consider the following 288-residue polypeptide: Protein PXR1 (288 aa).

In terms of domain architecture, G-patch spans 25–72 (QSRFGHKHLMRFGWQPGQGLGTQPVQSMKTHIKVSIKDDNLGLGAKLK). The disordered stretch occupies residues 147 to 258 (SYSQMEKDSS…TSIPESVSTR (112 aa)). A compositionally biased stretch (acidic residues) spans 157–166 (SDEESDDDED). Basic residues-rich tracts occupy residues 169–185 (KKHKIEKKEAKKSKKRK) and 195–214 (KKKKKSKKDKKEKKSKKDKK). A compositionally biased stretch (low complexity) spans 238–256 (RTASIESSTSATSIPESVS).

Belongs to the PINX1 family.

It is found in the nucleus. The protein resides in the nucleolus. In terms of biological role, involved in rRNA-processing at A0, A1 and A2 sites and negatively regulates telomerase. The protein is Protein PXR1 (PXR1) of Candida glabrata (strain ATCC 2001 / BCRC 20586 / JCM 3761 / NBRC 0622 / NRRL Y-65 / CBS 138) (Yeast).